A 117-amino-acid polypeptide reads, in one-letter code: Ribonuclease P protein component (117 aa).

This sequence belongs to the RnpA family. Consists of a catalytic RNA component (M1 or rnpB) and a protein subunit.

It catalyses the reaction Endonucleolytic cleavage of RNA, removing 5'-extranucleotides from tRNA precursor.. RNaseP catalyzes the removal of the 5'-leader sequence from pre-tRNA to produce the mature 5'-terminus. It can also cleave other RNA substrates such as 4.5S RNA. The protein component plays an auxiliary but essential role in vivo by binding to the 5'-leader sequence and broadening the substrate specificity of the ribozyme. This Nocardioides sp. (strain ATCC BAA-499 / JS614) protein is Ribonuclease P protein component.